The primary structure comprises 240 residues: tRNA (guanine-N(1)-)-methyltransferase (240 aa).

S-adenosyl-L-methionine contacts are provided by residues Gly108 and 127–132 (LGDYIL).

Belongs to the RNA methyltransferase TrmD family. Homodimer.

Its subcellular location is the cytoplasm. The enzyme catalyses guanosine(37) in tRNA + S-adenosyl-L-methionine = N(1)-methylguanosine(37) in tRNA + S-adenosyl-L-homocysteine + H(+). In terms of biological role, specifically methylates guanosine-37 in various tRNAs. The protein is tRNA (guanine-N(1)-)-methyltransferase of Streptococcus sanguinis (strain SK36).